Reading from the N-terminus, the 229-residue chain is ATP synthase subunit a (229 aa).

6 helical membrane-spanning segments follow: residues 25 to 45, 82 to 102, 104 to 124, 142 to 162, 181 to 201, and 202 to 222; these read ADAV…SIAA, FFPL…IGLV, GFFP…VVFV, FLGP…IGHL, LVLI…MMLM, and GVLV…IYIQ.

Belongs to the ATPase A chain family. In terms of assembly, F-type ATPases have 2 components, CF(1) - the catalytic core - and CF(0) - the membrane proton channel. CF(1) has five subunits: alpha(3), beta(3), gamma(1), delta(1), epsilon(1). CF(0) has three main subunits: a(1), b(2) and c(9-12). The alpha and beta chains form an alternating ring which encloses part of the gamma chain. CF(1) is attached to CF(0) by a central stalk formed by the gamma and epsilon chains, while a peripheral stalk is formed by the delta and b chains.

It is found in the cell inner membrane. Its function is as follows. Key component of the proton channel; it plays a direct role in the translocation of protons across the membrane. The protein is ATP synthase subunit a of Citrifermentans bemidjiense (strain ATCC BAA-1014 / DSM 16622 / JCM 12645 / Bem) (Geobacter bemidjiensis).